We begin with the raw amino-acid sequence, 464 residues long: Siroheme synthase (464 aa).

Residues 1-203 (MEFLPLFHNL…GQGAEAERLL (203 aa)) are precorrin-2 dehydrogenase /sirohydrochlorin ferrochelatase. NAD(+)-binding positions include 22–23 (EI) and 43–44 (PE). Residue serine 128 is modified to Phosphoserine. Positions 216 to 464 (GEVYLVGAGP…AWFEGAQATV (249 aa)) are uroporphyrinogen-III C-methyltransferase. Proline 225 serves as a coordination point for S-adenosyl-L-methionine. Aspartate 248 serves as the catalytic Proton acceptor. Residue lysine 270 is the Proton donor of the active site. Residues 301-303 (GGD), isoleucine 306, 331-332 (TA), methionine 383, and glycine 412 contribute to the S-adenosyl-L-methionine site.

It in the N-terminal section; belongs to the precorrin-2 dehydrogenase / sirohydrochlorin ferrochelatase family. The protein in the C-terminal section; belongs to the precorrin methyltransferase family.

It catalyses the reaction uroporphyrinogen III + 2 S-adenosyl-L-methionine = precorrin-2 + 2 S-adenosyl-L-homocysteine + H(+). The catalysed reaction is precorrin-2 + NAD(+) = sirohydrochlorin + NADH + 2 H(+). It carries out the reaction siroheme + 2 H(+) = sirohydrochlorin + Fe(2+). It participates in cofactor biosynthesis; adenosylcobalamin biosynthesis; precorrin-2 from uroporphyrinogen III: step 1/1. The protein operates within cofactor biosynthesis; adenosylcobalamin biosynthesis; sirohydrochlorin from precorrin-2: step 1/1. It functions in the pathway porphyrin-containing compound metabolism; siroheme biosynthesis; precorrin-2 from uroporphyrinogen III: step 1/1. Its pathway is porphyrin-containing compound metabolism; siroheme biosynthesis; siroheme from sirohydrochlorin: step 1/1. It participates in porphyrin-containing compound metabolism; siroheme biosynthesis; sirohydrochlorin from precorrin-2: step 1/1. Its function is as follows. Multifunctional enzyme that catalyzes the SAM-dependent methylations of uroporphyrinogen III at position C-2 and C-7 to form precorrin-2 via precorrin-1. Then it catalyzes the NAD-dependent ring dehydrogenation of precorrin-2 to yield sirohydrochlorin. Finally, it catalyzes the ferrochelation of sirohydrochlorin to yield siroheme. The protein is Siroheme synthase of Pseudomonas savastanoi pv. phaseolicola (strain 1448A / Race 6) (Pseudomonas syringae pv. phaseolicola (strain 1448A / Race 6)).